We begin with the raw amino-acid sequence, 108 residues long: U3-lycotoxin-Ls1w (108 aa).

The N-terminal stretch at methionine 1–alanine 20 is a signal peptide. Positions glutamate 21 to arginine 44 are excised as a propeptide. Cystine bridges form between cysteine 48-cysteine 63, cysteine 55-cysteine 72, cysteine 62-cysteine 87, and cysteine 74-cysteine 85.

It belongs to the neurotoxin 19 (CSTX) family. 01 subfamily. In terms of tissue distribution, expressed by the venom gland.

The protein localises to the secreted. The protein is U3-lycotoxin-Ls1w of Lycosa singoriensis (Wolf spider).